Here is a 360-residue protein sequence, read N- to C-terminus: Venom serine protease Bi-VSP (360 aa).

The signal sequence occupies residues 1 to 26; it reads MTGSKMLFACLALIAFLHPLVHVASA. Positions 27 to 113 are excised as a propeptide; sequence QECTTPNNKA…CGFSNVSHTR (87 aa). Positions 28–79 constitute a Clip domain; it reads ECTTPNNKAGKCLGIRVCKPLLEMLQTQGHAAADFLRQSVCKYENNNPIVCC. 7 disulfides stabilise this stretch: C29–C78, C39–C68, C45–C79, C104–C230, C147–C163, C278–C296, and C307–C335. Residue N108 is glycosylated (N-linked (GlcNAc...) asparagine). One can recognise a Peptidase S1 domain in the interval 114-360; it reads VVGGKPAVLG…LDDFILPAMQ (247 aa). The active-site Charge relay system is the H162. Residues D176, N178, R181, and D184 each coordinate Ca(2+). The active-site Charge relay system is D210. The Charge relay system role is filled by S311.

This sequence belongs to the peptidase S1 family. CLIP subfamily. In terms of tissue distribution, expressed by the venom gland.

Its subcellular location is the secreted. Functionally, multifunctional venom serine protease. In insects, it acts as an arthropod prophenoloxidase-activating factor, thereby triggering the phenoloxidase cascade. When injected into larvae, it induces a lethal melanization response in target insects by modulating the innate immune response. In mammals, it converts fibrinogen into fibrin, activates prothrombin, and also degrades fibrin. In mammal, it may act in a cooperative manner with the serine protease inhibitor Bi-KTI (AC G3LH89) to promote the spread of bee venom under anti-bleeding conditions. This is Venom serine protease Bi-VSP from Bombus ignitus (Bumblebee).